A 148-amino-acid chain; its full sequence is Deoxyuridine 5'-triphosphate nucleotidohydrolase (148 aa).

Residues 67 to 69 (RSG), Asn-80, 84 to 86 (LID), and Met-94 contribute to the substrate site.

The protein belongs to the dUTPase family. Mg(2+) serves as cofactor.

It catalyses the reaction dUTP + H2O = dUMP + diphosphate + H(+). It functions in the pathway pyrimidine metabolism; dUMP biosynthesis; dUMP from dCTP (dUTP route): step 2/2. This enzyme is involved in nucleotide metabolism: it produces dUMP, the immediate precursor of thymidine nucleotides and it decreases the intracellular concentration of dUTP so that uracil cannot be incorporated into DNA. This is Deoxyuridine 5'-triphosphate nucleotidohydrolase from Burkholderia lata (strain ATCC 17760 / DSM 23089 / LMG 22485 / NCIMB 9086 / R18194 / 383).